Reading from the N-terminus, the 477-residue chain is Calcium/calmodulin-dependent protein kinase type 1G (477 aa).

The region spanning 23 to 277 (FIFMEVLGSG…CEKALRHPWI (255 aa)) is the Protein kinase domain. ATP contacts are provided by residues 29–37 (LGSGAFSEV) and K52. D143 serves as the catalytic Proton acceptor. Residues 277–317 (IDGNTALHRDIYPSVSLQIQKNFAKSKWRQAFNAAAVVHHM) are autoinhibitory domain. The calmodulin-binding stretch occupies residues 297-318 (KNFAKSKWRQAFNAAAVVHHMR). The segment at 326 to 388 (SPSVRQEVEN…SRPSAPSGGR (63 aa)) is disordered. The segment covering 376–388 (SHSSRPSAPSGGR) has biased composition (low complexity).

It belongs to the protein kinase superfamily. CAMK Ser/Thr protein kinase family. CaMK subfamily. May be prenylated on Cys-474. As to expression, highly expressed in brain, in neuronal cell bodies of the central nucleus of amygdala and ventromedial hypothalamic nucleus. Also detected in heart, testis, and kidney.

It is found in the cytoplasm. Its subcellular location is the golgi apparatus membrane. It localises to the cell membrane. The enzyme catalyses L-seryl-[protein] + ATP = O-phospho-L-seryl-[protein] + ADP + H(+). It carries out the reaction L-threonyl-[protein] + ATP = O-phospho-L-threonyl-[protein] + ADP + H(+). Its activity is regulated as follows. Activated by Ca(2+)/calmodulin. Binding of calmodulin is thought to result in a conformational change and leads to activation through phosphorylation by CAMKK1. Functionally, calcium/calmodulin-dependent protein kinase belonging to a proposed calcium-triggered signaling cascade. In vitro phosphorylates transcription factor CREB1. The protein is Calcium/calmodulin-dependent protein kinase type 1G (Camk1g) of Mus musculus (Mouse).